The primary structure comprises 209 residues: Uracil phosphoribosyltransferase (209 aa).

Residues R79, R104, and 131–139 (DPMLATGGS) each bind 5-phospho-alpha-D-ribose 1-diphosphate. Residues I194 and 199–201 (GDA) contribute to the uracil site. D200 lines the 5-phospho-alpha-D-ribose 1-diphosphate pocket.

This sequence belongs to the UPRTase family. It depends on Mg(2+) as a cofactor.

It catalyses the reaction UMP + diphosphate = 5-phospho-alpha-D-ribose 1-diphosphate + uracil. It participates in pyrimidine metabolism; UMP biosynthesis via salvage pathway; UMP from uracil: step 1/1. Allosterically activated by GTP. Functionally, catalyzes the conversion of uracil and 5-phospho-alpha-D-ribose 1-diphosphate (PRPP) to UMP and diphosphate. In Lactobacillus delbrueckii subsp. bulgaricus (strain ATCC 11842 / DSM 20081 / BCRC 10696 / JCM 1002 / NBRC 13953 / NCIMB 11778 / NCTC 12712 / WDCM 00102 / Lb 14), this protein is Uracil phosphoribosyltransferase.